The primary structure comprises 232 residues: Small ribosomal subunit protein uS2 (232 aa).

Belongs to the universal ribosomal protein uS2 family.

The chain is Small ribosomal subunit protein uS2 from Natranaerobius thermophilus (strain ATCC BAA-1301 / DSM 18059 / JW/NM-WN-LF).